Consider the following 24-residue polypeptide: uncharacterized protein (24 aa).

Residues 1–3 (MKK) lie on the Cytoplasmic side of the membrane. The chain crosses the membrane as a helical span at residues 4–24 (TTIIMMGVAIIVVLGTELGWW).

It localises to the cell inner membrane. This is an uncharacterized protein from Escherichia coli (strain K12).